Reading from the N-terminus, the 132-residue chain is Protein p15 (132 aa).

Functionally, may play a role in infectivity. The protein is Protein p15 of Panicum mosaic virus (strain United States/Kansas 109S) (PMV).